The sequence spans 143 residues: Photosystem I reaction center subunit IV A, chloroplastic (143 aa).

Residues methionine 1 to arginine 44 constitute a chloroplast transit peptide. The interval valine 43 to serine 85 is disordered. Positions aspartate 48–lysine 73 are enriched in low complexity.

It belongs to the PsaE family. Post-translationally, 2 isoforms may exist. With or without the N-terminal alanine.

It is found in the plastid. Its subcellular location is the chloroplast thylakoid membrane. In terms of biological role, stabilizes the interaction between PsaC and the PSI core, assists the docking of the ferredoxin to PSI and interacts with ferredoxin-NADP oxidoreductase. The protein is Photosystem I reaction center subunit IV A, chloroplastic (PSAE1) of Arabidopsis thaliana (Mouse-ear cress).